The following is a 575-amino-acid chain: Dual specificity protein phosphatase YVH1 (575 aa).

A disordered region spans residues 185–213; it reads KHNNNNNNNNNNNNNNNNNNNNNNCCTFK. Residues 187-208 show a composition bias toward low complexity; that stretch reads NNNNNNNNNNNNNNNNNNNNNN. The region spanning 283–435 is the Tyrosine-protein phosphatase domain; sequence NYKINQEEDT…LLLYEKMNYT (153 aa). The active-site Phosphocysteine intermediate is cysteine 379. Positions 476 and 530 each coordinate Zn(2+).

It belongs to the protein-tyrosine phosphatase family. Non-receptor class dual specificity subfamily. Interacts with PES. Requires Zn(2+) as cofactor.

Its subcellular location is the cytoplasm. The protein resides in the nucleus. The catalysed reaction is O-phospho-L-tyrosyl-[protein] + H2O = L-tyrosyl-[protein] + phosphate. The enzyme catalyses O-phospho-L-seryl-[protein] + H2O = L-seryl-[protein] + phosphate. Functionally, dual specificity protein phosphatase which dephosphorylates both phosphotyrosine and phosphoserine residues. This Plasmodium falciparum (isolate 3D7) protein is Dual specificity protein phosphatase YVH1.